Reading from the N-terminus, the 102-residue chain is MRLSVTALLVTLALCYYEANAIVCPTFAADLTEFFYFPDLLYRLSLAKYNAPPEAVAAKMEVKQCTDRFSVKNRLIITNILGKILLNCTVTDVKAVLNPSSA.

A signal peptide spans 1 to 21; the sequence is MRLSVTALLVTLALCYYEANA. Asn87 is a glycosylation site (N-linked (GlcNAc...) asparagine).

It belongs to the secretoglobin family. Lipophilin subfamily.

The protein localises to the secreted. May bind androgens and other steroids. May be under transcriptional regulation of steroid hormones. This Bos taurus (Bovine) protein is Secretoglobin family 1D member (SCGB1D).